We begin with the raw amino-acid sequence, 256 residues long: 6-carboxyhexanoate--CoA ligase (256 aa).

Belongs to the BioW family. As to quaternary structure, homodimer. Requires Mg(2+) as cofactor.

The catalysed reaction is heptanedioate + ATP + CoA = 6-carboxyhexanoyl-CoA + AMP + diphosphate. It participates in metabolic intermediate metabolism; pimeloyl-CoA biosynthesis; pimeloyl-CoA from pimelate: step 1/1. Functionally, catalyzes the transformation of pimelate into pimeloyl-CoA with concomitant hydrolysis of ATP to AMP. The chain is 6-carboxyhexanoate--CoA ligase from Bacillus amyloliquefaciens (strain ATCC 23350 / DSM 7 / BCRC 11601 / CCUG 28519 / NBRC 15535 / NRRL B-14393 / F).